A 610-amino-acid polypeptide reads, in one-letter code: MDALLQVSVDGFRFENGSGSCCKPRNNLESGNNLFPDFHESQNQSSPNDSPPTVCLDNSPVLKYINDMLMDEEDFVGISRDDLALQAAERSFYEIIQQQSPESDQNTSSSSDQNSGDQDFCFPSTTTDSSALVSSGESQRKYRHRNDEEDDLENNRRNKQPAIFVSEMEELAVKLEHVLLVCKTNQEEEEERTVITKQSTPNRAGRAKGSSNKSKTHKTNTVDLRSLLTQCAQAVASFDQRRATDKLKEIRAHSSSNGDGTQRLAFYFAEALEARITGNISPPVSNPFPSSTTSMVDILKAYKLFVHTCPIYVTDYFAANKSIYELAMKATKLHIVDFGVLYGFQWPCLLRALSKRPGGPPMLRVTGIELPQAGFRPSDRVEETGRRLKRFCDQFNVPFEFNFIAKKWETITLDELMINPGETTVVNCIHRLQYTPDETVSLDSPRDTVLKLFRDINPDLFVFAEINGMYNSPFFMTRFREALFHYSSLFDMFDTTIHAEDEYKNRSLLERELLVRDAMSVISCEGAERFARPETYKQWRVRILRAGFKPATISKQIMKEAKEIVRKRYHRDFVIDSDNNWMLQGWKGRVIYAFSCWKPAEKFTNNNLNI.

Disordered stretches follow at residues 32 to 54 (NNLF…PPTV), 98 to 159 (QQSP…RRNK), and 186 to 220 (QEEE…HKTN). Low complexity-rich tracts occupy residues 41 to 52 (SQNQSSPNDSPP) and 99 to 119 (QSPE…GDQD). Polar residues-rich tracts occupy residues 123–137 (PSTT…SSGE) and 209–220 (GSSNKSKTHKTN). A GRAS domain is found at 215–598 (KTHKTNTVDL…RVIYAFSCWK (384 aa)). The tract at residues 222–283 (VDLRSLLTQC…ARITGNISPP (62 aa)) is leucine repeat I (LRI). The interval 302 to 367 (YKLFVHTCPI…GGPPMLRVTG (66 aa)) is VHIID. Residues 333–337 (LHIVD) carry the VHIID motif. A leucine repeat II (LRII) region spans residues 383 to 415 (ETGRRLKRFCDQFNVPFEFNFIAKKWETITLDE). Positions 424–520 (TVVNCIHRLQ…RELLVRDAMS (97 aa)) are PFYRE. An SAW region spans residues 523–598 (SCEGAERFAR…RVIYAFSCWK (76 aa)).

This sequence belongs to the GRAS family. In terms of tissue distribution, highly expressed in roots and at lower levels in leaves and sepals. Expressed in siliques.

The protein resides in the nucleus. In terms of biological role, probable transcription factor involved in plant development. In Arabidopsis thaliana (Mouse-ear cress), this protein is Scarecrow-like protein 11 (SCL11).